The sequence spans 421 residues: Lipid II:glycine glycyltransferase (421 aa).

This sequence belongs to the FemABX family. Monomer.

The protein resides in the cytoplasm. It catalyses the reaction beta-D-GlcNAc-(1-&gt;4)-Mur2Ac(oyl-L-Ala-D-isoglutaminyl-L-Lys-D-Ala-D-Ala)-di-trans,octa-cis-undecaprenyl diphosphate + glycyl-tRNA(Gly) = beta-D-GlcNAc-(1-&gt;4)-Mur2Ac(oyl-L-Ala-D-isoglutaminyl-L-Lys-(N(6)-Gly)-D-Ala-D-Ala)-di-trans,octa-cis-undecaprenyl diphosphate + tRNA(Gly) + H(+). Functionally, catalyzes the incorporation of the first glycine of the pentaglycine interpeptide bridge, which is characteristic of the S.aureus peptidoglycan. This glycine is added to the epsilon-amino group of the L-lysine of the membrane-bound lipid II intermediate (GlcNAc-(beta-1,4)-N-acetylmuramic acid(-L-Ala-D-iGln-L-Lys-D-Ala-D-Ala)-pyrophosphoryl-undecaprenol), using glycyl-tRNA(Gly) as donor, in a ribosome-independent mechanism. Involved in methicillin resistance. In Staphylococcus aureus (strain COL), this protein is Lipid II:glycine glycyltransferase (femX).